The primary structure comprises 500 residues: Pyridine nucleotide-disulfide oxidoreductase domain-containing protein 1 (500 aa).

An N-acetylmethionine modification is found at methionine 1.

Belongs to the class-I pyridine nucleotide-disulfide oxidoreductase family. PYROXD1 subfamily. It depends on FAD as a cofactor.

It localises to the nucleus. It is found in the cytoplasm. The protein localises to the myofibril. The protein resides in the sarcomere. In terms of biological role, probable FAD-dependent oxidoreductase; involved in the cellular oxidative stress response. Required for normal sarcomere structure and muscle fiber integrity. The polypeptide is Pyridine nucleotide-disulfide oxidoreductase domain-containing protein 1 (PYROXD1) (Pongo abelii (Sumatran orangutan)).